Consider the following 191-residue polypeptide: Ribonuclease HII (191 aa).

In terms of domain architecture, RNase H type-2 spans 7–191 (ILMAGVDEVG…YSPVADLISK (185 aa)). A divalent metal cation is bound by residues Asp13, Glu14, and Asp103.

It belongs to the RNase HII family. It depends on Mn(2+) as a cofactor. Requires Mg(2+) as cofactor.

Its subcellular location is the cytoplasm. It carries out the reaction Endonucleolytic cleavage to 5'-phosphomonoester.. Functionally, endonuclease that specifically degrades the RNA of RNA-DNA hybrids. This Legionella pneumophila (strain Paris) protein is Ribonuclease HII.